Here is a 103-residue protein sequence, read N- to C-terminus: Small ribosomal subunit protein uS10 (103 aa).

Belongs to the universal ribosomal protein uS10 family. As to quaternary structure, part of the 30S ribosomal subunit.

Involved in the binding of tRNA to the ribosomes. The chain is Small ribosomal subunit protein uS10 from Chromobacterium violaceum (strain ATCC 12472 / DSM 30191 / JCM 1249 / CCUG 213 / NBRC 12614 / NCIMB 9131 / NCTC 9757 / MK).